Consider the following 299-residue polypeptide: Probable transport accessory protein MmpS3 (299 aa).

Residues 1 to 72 (MSGPNPPGRE…EHVTGGPYVP (72 aa)) are disordered. A helical membrane pass occupies residues 101 to 121 (VVGVAAIIAAVALVVSVSLLV). Polar residues predominate over residues 128 to 139 (KLATGDTTSSAP). Residues 128 to 213 (KLATGDTTSS…TTTTPTGPRQ (86 aa)) are disordered. Residues 150–163 (PAPPPPPPAPPPTT) are compositionally biased toward pro residues. Over residues 164 to 176 (EIPTATETQTVTV) the composition is skewed to low complexity. A compositionally biased stretch (pro residues) spans 177-193 (TPPPPPPPATTTAPPPA).

It belongs to the MmpS family.

The protein resides in the cell membrane. This Mycobacterium tuberculosis (strain CDC 1551 / Oshkosh) protein is Probable transport accessory protein MmpS3 (mmpS3).